The following is a 210-amino-acid chain: Ribosomal RNA large subunit methyltransferase E (210 aa).

Positions 61, 63, 81, 97, and 122 each coordinate S-adenosyl-L-methionine. K162 acts as the Proton acceptor in catalysis.

The protein belongs to the class I-like SAM-binding methyltransferase superfamily. RNA methyltransferase RlmE family.

Its subcellular location is the cytoplasm. The catalysed reaction is uridine(2552) in 23S rRNA + S-adenosyl-L-methionine = 2'-O-methyluridine(2552) in 23S rRNA + S-adenosyl-L-homocysteine + H(+). In terms of biological role, specifically methylates the uridine in position 2552 of 23S rRNA at the 2'-O position of the ribose in the fully assembled 50S ribosomal subunit. The polypeptide is Ribosomal RNA large subunit methyltransferase E (Xanthomonas axonopodis pv. citri (strain 306)).